The chain runs to 275 residues: 2'-N-acetylparomamine deacetylase (275 aa).

Zn(2+) contacts are provided by His-14, Asp-17, and His-166.

It belongs to the PIGL family. Requires Zn(2+) as cofactor.

It carries out the reaction 2'-N-acetylparomamine + H2O = paromamine + acetate. Its pathway is antibiotic biosynthesis; butirosin biosynthesis. Its function is as follows. Deacetylase involved in the biosynthesis of butirosin by mediating deacetylation of 2'-N-acetylparomamine. This chain is 2'-N-acetylparomamine deacetylase (btrD), found in Niallia circulans (Bacillus circulans).